The following is a 148-amino-acid chain: Aspartate carbamoyltransferase regulatory chain (148 aa).

The Zn(2+) site is built by Cys106, Cys111, Cys134, and Cys137.

The protein belongs to the PyrI family. In terms of assembly, contains catalytic and regulatory chains. Requires Zn(2+) as cofactor.

Involved in allosteric regulation of aspartate carbamoyltransferase. The polypeptide is Aspartate carbamoyltransferase regulatory chain (Methanococcus vannielii (strain ATCC 35089 / DSM 1224 / JCM 13029 / OCM 148 / SB)).